We begin with the raw amino-acid sequence, 276 residues long: Light-independent protochlorophyllide reductase iron-sulfur ATP-binding protein (276 aa).

Residues Gly12–Thr17 and Lys41 contribute to the ATP site. Ser16 contacts Mg(2+). Cys97 and Cys131 together coordinate [4Fe-4S] cluster. ATP is bound at residue Asn182–Arg183.

Belongs to the NifH/BchL/ChlL family. In terms of assembly, homodimer. Protochlorophyllide reductase is composed of three subunits; BchL, BchN and BchB. [4Fe-4S] cluster is required as a cofactor.

The enzyme catalyses chlorophyllide a + oxidized 2[4Fe-4S]-[ferredoxin] + 2 ADP + 2 phosphate = protochlorophyllide a + reduced 2[4Fe-4S]-[ferredoxin] + 2 ATP + 2 H2O. It functions in the pathway porphyrin-containing compound metabolism; bacteriochlorophyll biosynthesis (light-independent). Functionally, component of the dark-operative protochlorophyllide reductase (DPOR) that uses Mg-ATP and reduced ferredoxin to reduce ring D of protochlorophyllide (Pchlide) to form chlorophyllide a (Chlide). This reaction is light-independent. The L component serves as a unique electron donor to the NB-component of the complex, and binds Mg-ATP. In Chlorobium chlorochromatii (strain CaD3), this protein is Light-independent protochlorophyllide reductase iron-sulfur ATP-binding protein.